Reading from the N-terminus, the 305-residue chain is Deoxyribonuclease gamma (305 aa).

The first 20 residues, 1-20, serve as a signal peptide directing secretion; sequence MSRELAPLLLLLLSIHSALA. The Bipartite nuclear localization signal signature appears at 35–51; it reads KQEDKNAMDVIVKVIKR. Residues Glu100 and His155 contribute to the active site. Cys194 and Cys231 are oxidised to a cystine. Residues 284–305 form a not required for free DNA-nuclease activity but required for activity towards liposome-coated DNA region; the sequence is SRAFTNSKKSVTLRKKTKSKRS. Residues 296–304 carry the Nuclear localization signal motif; it reads LRKKTKSKR.

Belongs to the DNase I family. The cofactor is Ca(2+). It depends on Mg(2+) as a cofactor. In terms of processing, poly-ADP-ribosylated by PARP1. ADP-ribosylation negatively regulates enzymatic activity during apoptosis. Liver and spleen.

It localises to the nucleus. Its subcellular location is the endoplasmic reticulum. The protein localises to the secreted. Inhibited by zinc. Functionally, has DNA hydrolytic activity. Is capable of both single- and double-stranded DNA cleavage, producing DNA fragments with 3'-OH ends. Can cleave chromatin to nucleosomal units and cleaves nucleosomal and liposome-coated DNA. Acts in internucleosomal DNA fragmentation (INDF) during apoptosis and necrosis. The role in apoptosis includes myogenic and neuronal differentiation, and BCR-mediated clonal deletion of self-reactive B cells. Is active on chromatin in apoptotic cell-derived membrane-coated microparticles and thus suppresses anti-DNA autoimmunity. Together with DNASE1, plays a key role in degrading neutrophil extracellular traps (NETs). NETs are mainly composed of DNA fibers and are released by neutrophils to bind pathogens during inflammation. Degradation of intravascular NETs by DNASE1 and DNASE1L3 is required to prevent formation of clots that obstruct blood vessels and cause organ damage following inflammation. This Homo sapiens (Human) protein is Deoxyribonuclease gamma.